Reading from the N-terminus, the 411-residue chain is LL-diaminopimelate aminotransferase (411 aa).

2 residues coordinate substrate: Y15 and G42. Pyridoxal 5'-phosphate-binding positions include Y72, A108 to K109, Y132, N188, Y219, and S247 to S249. Residues K109, Y132, and N188 each coordinate substrate. Position 250 is an N6-(pyridoxal phosphate)lysine (K250). Positions 258 and 293 each coordinate pyridoxal 5'-phosphate. Residues N293 and R389 each contribute to the substrate site.

It belongs to the class-I pyridoxal-phosphate-dependent aminotransferase family. LL-diaminopimelate aminotransferase subfamily. Homodimer. It depends on pyridoxal 5'-phosphate as a cofactor.

The enzyme catalyses (2S,6S)-2,6-diaminopimelate + 2-oxoglutarate = (S)-2,3,4,5-tetrahydrodipicolinate + L-glutamate + H2O + H(+). It participates in amino-acid biosynthesis; L-lysine biosynthesis via DAP pathway; LL-2,6-diaminopimelate from (S)-tetrahydrodipicolinate (aminotransferase route): step 1/1. Functionally, involved in the synthesis of meso-diaminopimelate (m-DAP or DL-DAP), required for both lysine and peptidoglycan biosynthesis. Catalyzes the direct conversion of tetrahydrodipicolinate to LL-diaminopimelate. This chain is LL-diaminopimelate aminotransferase, found in Desulfitobacterium hafniense (strain Y51).